A 374-amino-acid polypeptide reads, in one-letter code: Translocating chain-associated membrane protein 1 (374 aa).

The Cytoplasmic portion of the chain corresponds to Met-1–Cys-29. Residues Val-30–Phe-50 form a helical membrane-spanning segment. Residues Val-51–Gly-76 lie on the Lumenal side of the membrane. The N-linked (GlcNAc...) asparagine glycan is linked to Asn-56. A helical membrane pass occupies residues Ile-77–Ile-97. The Cytoplasmic segment spans residues Gln-98 to Glu-121. Residues Ser-117–His-326 enclose the TLC domain. The helical transmembrane segment at Ser-122–Ser-142 threads the bilayer. The Lumenal portion of the chain corresponds to Glu-143–Asn-159. The chain crosses the membrane as a helical span at residues Leu-160–Phe-180. At Pro-181 to Asp-192 the chain is on the cytoplasmic side. A helical transmembrane segment spans residues Ile-193–Leu-213. Residue Asn-214 is a topological domain, lumenal. Residues Leu-215–Ile-235 traverse the membrane as a helical segment. Topologically, residues Ser-236–Ser-251 are cytoplasmic. The helical transmembrane segment at Leu-252–Val-272 threads the bilayer. The Lumenal segment spans residues Gly-273–Arg-297. A helical membrane pass occupies residues Ile-298 to Phe-318. Over Gln-319–Ser-374 the chain is Cytoplasmic. A compositionally biased stretch (basic residues) spans Val-334–Lys-347. The tract at residues Val-334 to Ser-374 is disordered. Polar residues predominate over residues Asn-352–Ala-363. Phosphoserine is present on Ser-365.

The protein belongs to the TRAM family. As to quaternary structure, interacts with SEC61B. May interact with Derlin-1/DERL1. Post-translationally, N-glycosylated.

The protein localises to the endoplasmic reticulum membrane. Functionally, involved in the translocation of nascent protein chains into or through the endoplasmic reticulum (ER) membrane by facilitating the proper chain positioning at the SEC61 channel. Regulates the exposure of nascent secretory protein chain to the cytosol during translocation into the ER. May affect the phospholipid bilayer in the vicinity of the lateral gate of the SEC61 channel, thereby facilitating ER protein transport. Intimately associates with transmembrane (TM) domain of nascent membrane proteins during the entire integration process into the ER membrane. Associates with the second TM domain of G-protein-coupled receptor opsin/OPSD nascent chain in the ER membrane, which may facilitate its integration into the membrane. Under conditions of ER stress, participates in the disposal of misfolded ER membrane proteins during the unfolded protein response (UPR), an integrated stress response (ISR) pathway, by selectively retrotranslocating misfolded ER-membrane proteins from the ER into the cytosol where they are ubiquitinated and degraded by the proteasome. In Pongo abelii (Sumatran orangutan), this protein is Translocating chain-associated membrane protein 1 (TRAM1).